A 118-amino-acid chain; its full sequence is Vacuolar ATPase assembly integral membrane protein vma-21 (118 aa).

Residues Met1 to Ala35 are Cytoplasmic-facing. The helical transmembrane segment at Val36–Ile56 threads the bilayer. Residues Ser57–Tyr73 are Lumenal-facing. Residues Ala74 to Met94 traverse the membrane as a helical segment. Residues Ala95–Leu118 are Cytoplasmic-facing. Residues Gln98–Leu118 form a disordered region. A compositionally biased stretch (basic and acidic residues) spans Glu102 to Leu118. The Prevents secretion from ER signature appears at Lys115–Leu118.

This sequence belongs to the VMA21 family.

Its subcellular location is the endoplasmic reticulum membrane. It is found in the endoplasmic reticulum-Golgi intermediate compartment membrane. The protein localises to the cytoplasmic vesicle. The protein resides in the COPII-coated vesicle membrane. In terms of biological role, required for the assembly of the V0 complex of the vacuolar ATPase (V-ATPase) in the endoplasmic reticulum. This is Vacuolar ATPase assembly integral membrane protein vma-21 (vma-21) from Neurospora crassa (strain ATCC 24698 / 74-OR23-1A / CBS 708.71 / DSM 1257 / FGSC 987).